A 417-amino-acid chain; its full sequence is NADH-quinone oxidoreductase subunit D (417 aa).

The protein belongs to the complex I 49 kDa subunit family. NDH-1 is composed of 14 different subunits. Subunits NuoB, C, D, E, F, and G constitute the peripheral sector of the complex.

Its subcellular location is the cell inner membrane. The enzyme catalyses a quinone + NADH + 5 H(+)(in) = a quinol + NAD(+) + 4 H(+)(out). NDH-1 shuttles electrons from NADH, via FMN and iron-sulfur (Fe-S) centers, to quinones in the respiratory chain. The immediate electron acceptor for the enzyme in this species is believed to be ubiquinone. Couples the redox reaction to proton translocation (for every two electrons transferred, four hydrogen ions are translocated across the cytoplasmic membrane), and thus conserves the redox energy in a proton gradient. The chain is NADH-quinone oxidoreductase subunit D from Leptothrix cholodnii (strain ATCC 51168 / LMG 8142 / SP-6) (Leptothrix discophora (strain SP-6)).